Reading from the N-terminus, the 612-residue chain is FAD-linked oxidoreductase notD' (612 aa).

An N-terminal signal peptide occupies residues M1–G19. 3 N-linked (GlcNAc...) asparagine glycosylation sites follow: N50, N86, and N109. The FAD-binding PCMH-type domain occupies G124–A307. N-linked (GlcNAc...) asparagine glycans are attached at residues N311 and N396.

Belongs to the oxygen-dependent FAD-linked oxidoreductase family. Requires FAD as cofactor.

The protein operates within alkaloid biosynthesis. Its function is as follows. FAD-linked oxidoreductase; part of the gene cluster that mediates the biosynthesis of notoamide, a fungal indole alkaloid that belongs to a family of natural products containing a characteristic bicyclo[2.2.2]diazaoctane core. The first step of notoamide biosynthesis involves coupling of L-proline and L-tryptophan by the bimodular NRPS notE', to produce cyclo-L-tryptophan-L-proline called brevianamide F. The reverse prenyltransferase notF' then acts as a deoxybrevianamide E synthase and converts brevianamide F to deoxybrevianamide E via reverse prenylation at C-2 of the indole ring leading to the bicyclo[2.2.2]diazaoctane core. Deoxybrevianamide E is further hydroxylated at C-6 of the indole ring, likely catalyzed by the cytochrome P450 monooxygenase notG', to yield 6-hydroxy-deoxybrevianamide E. 6-hydroxy-deoxybrevianamide E is a specific substrate of the prenyltransferase notC' for normal prenylation at C-7 to produce 6-hydroxy-7-prenyl-deoxybrevianamide, also called notoamide S. As the proposed pivotal branching point in notoamide biosynthesis, notoamide S can be diverted to notoamide E through an oxidative pyran ring closure putatively catalyzed by either notH' cytochrome P450 monooxygenase or the notD' FAD-linked oxidoreductase. This step would be followed by an indole 2,3-epoxidation-initiated pinacol-like rearrangement catalyzed by the notB' FAD-dependent monooxygenase leading to the formation of notoamide C and notoamide D. On the other hand notoamide S is converted to notoamide T by notH' (or notD'), a bifunctional oxidase that also functions as the intramolecular Diels-Alderase responsible for generation of (-)-notoamide T. To generate antipodal (+)-notoaminide T, notH (or notD) in Aspergillus strain MF297-2 is expected to catalyze a Diels-Alder reaction leading to the opposite stereochemistry. The remaining oxidoreductase notD' (or notH') likely catalyzes the oxidative pyran ring formation to yield (-)-stephacidin A. The FAD-dependent monooxygenase notI' is highly similar to notB' and is predicted to catalyze a similar conversion from (-)-stephacidin A to (+)-notoamide B via the 2,3-epoxidation of (-)-stephacidin A followed by a pinacol-type rearrangement. Finally, it remains unclear which enzyme could be responsible for the final hydroxylation steps leading to notoamide A and sclerotiamide. The polypeptide is FAD-linked oxidoreductase notD' (Aspergillus versicolor).